A 500-amino-acid polypeptide reads, in one-letter code: FAD-linked oxidoreductase srdI (500 aa).

An N-terminal signal peptide occupies residues 1-20 (MHLSSSLLFTSALLAGGINA). Asn47 carries N-linked (GlcNAc...) asparagine glycosylation. Residues 69 to 241 (YRPPSYQAAI…TQATYKMHKS (173 aa)) enclose the FAD-binding PCMH-type domain. N-linked (GlcNAc...) asparagine glycosylation is found at Asn257 and Asn282.

This sequence belongs to the oxygen-dependent FAD-linked oxidoreductase family. Requires FAD as cofactor.

FAD-linked oxidoreductase; part of the gene cluster that mediates the biosynthesis of sordarial, a salicylic aldehyde structurally related to the phytotoxin pyriculol. The most interesting aspect of this pathway is formation of an aromatic product from the highly reducing polyketide synthase srdA. SrdA synthesizes a reduced polyketide chain from one molecule of acetyl-CoA and five molecules of malonyl-CoA. The polyketide chain is then reductively released as an aldehyde. The oxidoreductases srdC, srdD and srdE then oxidize one of the hydroxy groups to facilitate the intramolecular aldol condensation, followed by dehydration to yield a salicylic aldehyde. This aldehyde can undergo facile reduction by endogenous reductases to yield the alcohol 1-hydroxy-2-hydroxymethyl-3-pent-1,3-dienylbenzene. The flavin-dependent srdI counteract against the propensity of the aldehydes to be reduced under physiological conditions and is responsible for reoxidizing 1-hydroxy-2-hydroxymethyl-3-pent-1,3-dienylbenzene back to the salicylic aldehyde. This salicylic aldehyde is then selectively epoxidized by the cupin-domain-containing oxidoreductase srdB to yield the epoxide, which can be hydrolyzed stereoselectively by the hydrolase srdG to give the final product sordarial. The polypeptide is FAD-linked oxidoreductase srdI (Neurospora crassa (strain ATCC 24698 / 74-OR23-1A / CBS 708.71 / DSM 1257 / FGSC 987)).